Consider the following 715-residue polypeptide: Fatty acid oxidation complex subunit alpha (715 aa).

Residues Met-1–Pro-190 are enoyl-CoA hydratase. The 3-hydroxyacyl-CoA dehydrogenase stretch occupies residues Gly-306–Asn-715.

This sequence in the N-terminal section; belongs to the enoyl-CoA hydratase/isomerase family. The protein in the central section; belongs to the 3-hydroxyacyl-CoA dehydrogenase family. In terms of assembly, heterotetramer of two alpha chains (FadJ) and two beta chains (FadI).

Its subcellular location is the cytoplasm. The enzyme catalyses a (3S)-3-hydroxyacyl-CoA = a (2E)-enoyl-CoA + H2O. It catalyses the reaction a 4-saturated-(3S)-3-hydroxyacyl-CoA = a (3E)-enoyl-CoA + H2O. The catalysed reaction is a (3S)-3-hydroxyacyl-CoA + NAD(+) = a 3-oxoacyl-CoA + NADH + H(+). It carries out the reaction (3S)-3-hydroxybutanoyl-CoA = (3R)-3-hydroxybutanoyl-CoA. It participates in lipid metabolism; fatty acid beta-oxidation. In terms of biological role, catalyzes the formation of a hydroxyacyl-CoA by addition of water on enoyl-CoA. Also exhibits 3-hydroxyacyl-CoA epimerase and 3-hydroxyacyl-CoA dehydrogenase activities. The chain is Fatty acid oxidation complex subunit alpha from Salmonella enteritidis PT4 (strain P125109).